A 245-amino-acid chain; its full sequence is Fibroblast growth factor 13 (245 aa).

The interval 1–36 (MAAAIASSLIRQKRQAREREKSNACKCVSSPSKGKT) is disordered. The tract at residues 1 to 62 (MAAAIASSLI…GSKKRRRRRP (62 aa)) is mediates targeting to the nucleus. Residues 67-201 (KGIVTKLYSR…AHFLPKPLKV (135 aa)) form a mediates interaction with sodium channels region. The segment at 157–164 (SMIYRQQQ) is tubulin-binding domain necessary and sufficient for tubulin-binding. S208 carries the phosphoserine modification. A disordered region spans residues 213–245 (TEFSRSGSGTPTKSRSVSGVLNGGKSMSHNEST). The span at 215–245 (FSRSGSGTPTKSRSVSGVLNGGKSMSHNEST) shows a compositional bias: polar residues.

This sequence belongs to the heparin-binding growth factors family. As to quaternary structure, interacts with SCN8A; regulates SCN8A activity. Interacts with SCN1A; may regulate SCN1A activity. Interacts with SCN5A; the interaction is direct and may regulate SNC5A density at membranes and function. May also interact with SCN2A and SCN11A. Interacts with MAPK8IP2; may regulate the MAPK8IP2 scaffolding activity. May be phosphorylated. In terms of tissue distribution, detected in brain, eye and heart. In brain, the different isoforms display different patterns of expression. Expressed in brain and heart (at protein level). Isoform 3 is highly expressed in cardiac myocytes while isoform 1 is the most abundant in brain.

It localises to the cell projection. The protein localises to the filopodium. It is found in the growth cone. The protein resides in the dendrite. Its subcellular location is the cell membrane. It localises to the sarcolemma. The protein localises to the cytoplasm. It is found in the nucleus. Functionally, microtubule-binding protein which directly binds tubulin and is involved in both polymerization and stabilization of microtubules. Through its action on microtubules, may participate to the refinement of axons by negatively regulating axonal and leading processes branching. Plays a crucial role in neuron polarization and migration in the cerebral cortex and the hippocampus. Regulates voltage-gated sodium channel transport and function. May also play a role in MAPK signaling. Required for the development of axonal initial segment-targeting inhibitory GABAergic synapses made by chandelier neurons. In terms of biological role, seems not to be involved in neuroblast polarization and migration but regulates axon branching. In Mus musculus (Mouse), this protein is Fibroblast growth factor 13.